The primary structure comprises 219 residues: GTP-binding protein Rab-3D (219 aa).

Alanine 2 is subject to N-acetylalanine. Glycine 29–serine 37 is a GDP binding site. Serine 31, serine 32, valine 33, glycine 34, lysine 35, threonine 36, serine 37, proline 49, and serine 53 together coordinate GTP. Threonine 36 is a Mg(2+) binding site. A Switch 1 motif is present at residues proline 49–aspartate 58. Residues threonine 54 and aspartate 77 each coordinate Mg(2+). Position 80 (glycine 80) interacts with GTP. Residues glycine 80–methionine 96 carry the Switch 2 motif. At threonine 86 the chain carries Phosphothreonine. Asparagine 135, lysine 136, aspartate 138, alanine 166, and lysine 167 together coordinate GTP. GDP-binding positions include asparagine 135 to aspartate 138 and serine 165 to lysine 167. At serine 190 the chain carries Phosphoserine. A disordered region spans residues serine 190–cysteine 219. Residues proline 193–glycine 203 show a composition bias toward low complexity. A compositionally biased stretch (pro residues) spans threonine 209–cysteine 219. Residues cysteine 217 and cysteine 219 are each lipidated (S-geranylgeranyl cysteine). The residue at position 219 (cysteine 219) is a Cysteine methyl ester; partial.

It belongs to the small GTPase superfamily. Rab family. As to quaternary structure, interacts with RIMS1, RIMS2, RPH3A and RPH3AL. Interacts with RAB3IP. The GTP-bound form interacts with REP15. Interacts with CHM; phosphorylation at Thr-86 disrupts this interaction. Interacts with MADD (via uDENN domain); the GTP-bound form is preferred for interaction. Mg(2+) is required as a cofactor. In terms of processing, in fetal glands the majority of the proteins are methylated, whereas in neonatal and adult glands, only 50% are methylated. Phosphorylation of Thr-86 in the switch II region by LRRK2 prevents the association of RAB regulatory proteins, including CHM. In terms of tissue distribution, highest levels found in lung.

The protein localises to the cell membrane. It catalyses the reaction GTP + H2O = GDP + phosphate + H(+). Its activity is regulated as follows. Regulated by guanine nucleotide exchange factors (GEFs) which promote the exchange of bound GDP for free GTP. Regulated by GTPase activating proteins (GAPs) which increase the GTP hydrolysis activity. Inhibited by GDP dissociation inhibitors (GDIs) which prevent Rab-GDP dissociation. The small GTPases Rab are key regulators of intracellular membrane trafficking, from the formation of transport vesicles to their fusion with membranes. Rabs cycle between an inactive GDP-bound form and an active GTP-bound form that is able to recruit to membranes different sets of downstream effectors directly responsible for vesicle formation, movement, tethering and fusion. RAB3D may be involved in the insulin-induced exocytosis of GLUT4-containing vesicles in adipocytes. The polypeptide is GTP-binding protein Rab-3D (Rattus norvegicus (Rat)).